The sequence spans 1091 residues: ATP-dependent helicase/deoxyribonuclease subunit B (1091 aa).

The protein belongs to the helicase family. AddB/RexB type 2 subfamily. Heterodimer of AddA and RexB. Mg(2+) is required as a cofactor.

In terms of biological role, the heterodimer acts as both an ATP-dependent DNA helicase and an ATP-dependent, dual-direction single-stranded exonuclease. Recognizes the chi site generating a DNA molecule suitable for the initiation of homologous recombination. This subunit has 5' -&gt; 3' nuclease activity but not helicase activity. In Streptococcus pneumoniae serotype 19F (strain G54), this protein is ATP-dependent helicase/deoxyribonuclease subunit B.